The chain runs to 362 residues: Vignain (362 aa).

The first 20 residues, 1 to 20 (MATKKLLWVVLSFSLVLGVA), serve as a signal peptide directing secretion. Residues 21–131 (NSFDFHDKDL…YEKVVSVPPS (111 aa)) constitute a propeptide, activation peptide. Intrachain disulfides connect Cys-149/Cys-191, Cys-183/Cys-224, and Cys-282/Cys-334. Cys-152 is an active-site residue. Catalysis depends on residues His-288 and Asn-309. 2 N-linked (GlcNAc...) asparagine glycosylation sites follow: Asn-326 and Asn-346. The short motif at 359–362 (KDEL) is the Prevents secretion from ER element.

The protein belongs to the peptidase C1 family. As to quaternary structure, monomer.

Its subcellular location is the endoplasmic reticulum lumen. In terms of biological role, thought to be involved in the hydrolysis of stored seed proteins. The sequence is that of Vignain from Phaseolus vulgaris (Kidney bean).